The primary structure comprises 66 residues: UPF0391 membrane protein AM1_5042 (66 aa).

Helical transmembrane passes span 4–24 (LTLT…SGIA) and 28–47 (AAIA…LVWP).

It belongs to the UPF0391 family.

It localises to the cell membrane. The sequence is that of UPF0391 membrane protein AM1_5042 from Acaryochloris marina (strain MBIC 11017).